The chain runs to 206 residues: Small ribosomal subunit protein uS4 (206 aa).

Residues 96-157 (SRLDNVVYRM…KAQKQLRVQA (62 aa)) enclose the S4 RNA-binding domain.

Belongs to the universal ribosomal protein uS4 family. Part of the 30S ribosomal subunit. Contacts protein S5. The interaction surface between S4 and S5 is involved in control of translational fidelity.

Its function is as follows. One of the primary rRNA binding proteins, it binds directly to 16S rRNA where it nucleates assembly of the body of the 30S subunit. With S5 and S12 plays an important role in translational accuracy. The sequence is that of Small ribosomal subunit protein uS4 from Alkalilimnicola ehrlichii (strain ATCC BAA-1101 / DSM 17681 / MLHE-1).